The primary structure comprises 806 residues: MEGPNSMEVGSLEVKKNDKDPWSKTAYLGGRLVSKIPAVYSNDNKFVFLTYDTFIGIFSLITGDCINRIFFPNNLANLLPVAVLLSPENAFELYVIFQSGYVCVHDWSNSELLRTMEISTRVHAASFSGKLLFAVTDTPASDSASSQDRFTLYALSPSTSKEGSSILIPTFVSKFNEFLALDSSLRDNNLATVAVITTDKAIFSLNVPKKKRSQRWIHREHLFNMPQKLTNVSLCGSACAVSDDEGKIHVINDISNEKFNPQILHWHANPLNGLSWALNGEYLLSGGQEGVLVLWQMETSHRQFLPRLGSSILSIATSHDSDSYALHLGDNSLVVIRAVDLAEQIHVSGINSFESKYLTSTGPKNTSKQLQGLVQFSSVSPNGELLLMSSSSFNGHSVSVQEYDLTKDSTIRKFEAARYSYSSVSKNSDDATSLDNGHVGSVAVTSSRNGLYIATIDTWCTNIIDEQQRNVKQTALKFWQFDSVQKTWVLMTRIDNPHGNLEVVTALKMMTSSNRFITVGTDATLRIWALLPGSSAWKCVAIHHFANTHSQASIKQRYGFSKALTCSLDDSIIGFGYGSCMHFINSETLEEISTVDLPHGGQLENAQFLNAEHCVIISQRRLLVWNVISASVQWTLASKFTGLLASSSSGNDFAVIDFNSSYSRLIIFSPDSPKIQSIHIFKTLPVALHYLHGGFVVLDNKSIIHVYAGDLTTKIPSAQLSIDNTSRSLLGDFQKRNVPLLNLENPISGSQGLHYKRLTTDMIHNLFNVPSNSPVNMQAIYNTFSKMAVGEPMESLGTQIATLNTE.

WD repeat units follow at residues 266–305 (WHAN…RQFL), 448–489 (RNGL…KTWV), 499–538 (GNLE…SAWK), and 598–635 (PHGG…VQWT).

Component of the ribosomal small subunit (SSU) processome.

Its subcellular location is the nucleus. It is found in the nucleolus. Its function is as follows. Involved in nucleolar processing of pre-18S ribosomal RNA. Required for optimal pre-ribosomal RNA transcription by RNA polymerase I together with a subset of U3 proteins required for transcription (t-UTPs). The protein is U3 small nucleolar RNA-associated protein 17 (utp17) of Schizosaccharomyces pombe (strain 972 / ATCC 24843) (Fission yeast).